The chain runs to 468 residues: Putative BTB/POZ domain and WD-repeat protein R154 (468 aa).

Positions 14–85 (SDLQLIVEDS…FYGIDDKLPE (72 aa)) constitute a BTB domain. WD repeat units lie at residues 194–233 (HHSENITSLCYDNNNKRIIYGDLKGTIYAYDFFSNKIIFN), 354–398 (DEIG…LVKS), and 401–440 (LFDVPIISMTYSPNGDQLIVANCDREVRILNSDNYEIIYT).

It belongs to the mimivirus BTB/WD family.

In Acanthamoeba polyphaga (Amoeba), this protein is Putative BTB/POZ domain and WD-repeat protein R154.